A 132-amino-acid polypeptide reads, in one-letter code: Small ribosomal subunit protein uS8 (132 aa).

It belongs to the universal ribosomal protein uS8 family. As to quaternary structure, part of the 30S ribosomal subunit. Contacts proteins S5 and S12.

One of the primary rRNA binding proteins, it binds directly to 16S rRNA central domain where it helps coordinate assembly of the platform of the 30S subunit. In Lysinibacillus sphaericus (strain C3-41), this protein is Small ribosomal subunit protein uS8.